A 335-amino-acid chain; its full sequence is Probable tRNA N6-adenosine threonylcarbamoyltransferase (335 aa).

His109, His113, and Tyr130 together coordinate a divalent metal cation. Substrate is bound by residues Tyr130–Gly134, Asp162, Gly177, Glu181, and Asn266. Residue Asp294 coordinates a divalent metal cation.

This sequence belongs to the KAE1 / TsaD family. In terms of assembly, component of the EKC/KEOPS complex; the whole complex dimerizes. It depends on a divalent metal cation as a cofactor.

The protein resides in the cytoplasm. It localises to the nucleus. The enzyme catalyses L-threonylcarbamoyladenylate + adenosine(37) in tRNA = N(6)-L-threonylcarbamoyladenosine(37) in tRNA + AMP + H(+). Functionally, component of the EKC/KEOPS complex that is required for the formation of a threonylcarbamoyl group on adenosine at position 37 (t(6)A37) in tRNAs that read codons beginning with adenine. The complex is probably involved in the transfer of the threonylcarbamoyl moiety of threonylcarbamoyl-AMP (TC-AMP) to the N6 group of A37. Osgep likely plays a direct catalytic role in this reaction, but requires other protein(s) of the complex to fulfill this activity. In Nematostella vectensis (Starlet sea anemone), this protein is Probable tRNA N6-adenosine threonylcarbamoyltransferase.